We begin with the raw amino-acid sequence, 319 residues long: Acetyl-coenzyme A carboxylase carboxyl transferase subunit alpha (319 aa).

One can recognise a CoA carboxyltransferase C-terminal domain in the interval 35 to 296 (NLDEEVQRLR…KAQLLADLSD (262 aa)).

This sequence belongs to the AccA family. In terms of assembly, acetyl-CoA carboxylase is a heterohexamer composed of biotin carboxyl carrier protein (AccB), biotin carboxylase (AccC) and two subunits each of ACCase subunit alpha (AccA) and ACCase subunit beta (AccD).

It is found in the cytoplasm. It carries out the reaction N(6)-carboxybiotinyl-L-lysyl-[protein] + acetyl-CoA = N(6)-biotinyl-L-lysyl-[protein] + malonyl-CoA. Its pathway is lipid metabolism; malonyl-CoA biosynthesis; malonyl-CoA from acetyl-CoA: step 1/1. In terms of biological role, component of the acetyl coenzyme A carboxylase (ACC) complex. First, biotin carboxylase catalyzes the carboxylation of biotin on its carrier protein (BCCP) and then the CO(2) group is transferred by the carboxyltransferase to acetyl-CoA to form malonyl-CoA. This Yersinia enterocolitica serotype O:8 / biotype 1B (strain NCTC 13174 / 8081) protein is Acetyl-coenzyme A carboxylase carboxyl transferase subunit alpha.